The chain runs to 340 residues: Cobalt-precorrin-5B C(1)-methyltransferase (340 aa).

It belongs to the CbiD family.

It catalyses the reaction Co-precorrin-5B + S-adenosyl-L-methionine = Co-precorrin-6A + S-adenosyl-L-homocysteine. Its pathway is cofactor biosynthesis; adenosylcobalamin biosynthesis; cob(II)yrinate a,c-diamide from sirohydrochlorin (anaerobic route): step 6/10. Catalyzes the methylation of C-1 in cobalt-precorrin-5B to form cobalt-precorrin-6A. This is Cobalt-precorrin-5B C(1)-methyltransferase from Methanococcoides burtonii (strain DSM 6242 / NBRC 107633 / OCM 468 / ACE-M).